A 385-amino-acid chain; its full sequence is A-type ATP synthase subunit C (385 aa).

Belongs to the V-ATPase V0D/AC39 subunit family. Has multiple subunits with at least A(3), B(3), C, D, E, F, H, I and proteolipid K(x).

It localises to the cell membrane. Functionally, component of the A-type ATP synthase that produces ATP from ADP in the presence of a proton gradient across the membrane. The polypeptide is A-type ATP synthase subunit C (Methanothermobacter thermautotrophicus (strain ATCC 29096 / DSM 1053 / JCM 10044 / NBRC 100330 / Delta H) (Methanobacterium thermoautotrophicum)).